The following is a 157-amino-acid chain: MKIIGIDPGYGILGYGVLEKSGNKISHITHGVITTDKELSMYKRLQVIYEEFLRLLKEYSPDACAIESLFFYKNVKTAIRVGEARGVILLATSQMDLPLYEFTPYQVKNNITGYGHSDKKQVQKMVKMLLNLDKIPRPDDAADALAVAWCLAVETRF.

Active-site residues include aspartate 7, glutamate 67, and aspartate 140. Residues aspartate 7, glutamate 67, and aspartate 140 each contribute to the Mg(2+) site.

Belongs to the RuvC family. Homodimer which binds Holliday junction (HJ) DNA. The HJ becomes 2-fold symmetrical on binding to RuvC with unstacked arms; it has a different conformation from HJ DNA in complex with RuvA. In the full resolvosome a probable DNA-RuvA(4)-RuvB(12)-RuvC(2) complex forms which resolves the HJ. Mg(2+) is required as a cofactor.

Its subcellular location is the cytoplasm. The catalysed reaction is Endonucleolytic cleavage at a junction such as a reciprocal single-stranded crossover between two homologous DNA duplexes (Holliday junction).. The RuvA-RuvB-RuvC complex processes Holliday junction (HJ) DNA during genetic recombination and DNA repair. Endonuclease that resolves HJ intermediates. Cleaves cruciform DNA by making single-stranded nicks across the HJ at symmetrical positions within the homologous arms, yielding a 5'-phosphate and a 3'-hydroxyl group; requires a central core of homology in the junction. The consensus cleavage sequence is 5'-(A/T)TT(C/G)-3'. Cleavage occurs on the 3'-side of the TT dinucleotide at the point of strand exchange. HJ branch migration catalyzed by RuvA-RuvB allows RuvC to scan DNA until it finds its consensus sequence, where it cleaves and resolves the cruciform DNA. The protein is Crossover junction endodeoxyribonuclease RuvC of Thermosipho melanesiensis (strain DSM 12029 / CIP 104789 / BI429).